Here is a 129-residue protein sequence, read N- to C-terminus: MNRRLKNYLSVGIFAFFGGGLRAYLNLIWSQTGTLTANIIGCFLLAFFTYFFVEYREGRDWLVTGLSTGFVGSFTTFSSFNLDTLKQLESGMNSQATIYFFSSIFIGFLFAYLGMLVGKRTGRKLAEKA.

The next 4 helical transmembrane spans lie at 9–29 (LSVGIFAFFGGGLRAYLNLIW), 33–53 (GTLTANIIGCFLLAFFTYFFV), 62–82 (LVTGLSTGFVGSFTTFSSFNL), and 98–118 (IYFFSSIFIGFLFAYLGMLVG). Residues Gly-72 and Thr-75 each coordinate Na(+).

It belongs to the fluoride channel Fluc/FEX (TC 1.A.43) family.

The protein resides in the cell membrane. The enzyme catalyses fluoride(in) = fluoride(out). With respect to regulation, na(+) is not transported, but it plays an essential structural role and its presence is essential for fluoride channel function. Functionally, fluoride-specific ion channel. Important for reducing fluoride concentration in the cell, thus reducing its toxicity. This chain is Fluoride-specific ion channel FluC 1, found in Lactobacillus johnsonii (strain CNCM I-12250 / La1 / NCC 533).